Here is a 90-residue protein sequence, read N- to C-terminus: Large ribosomal subunit protein bL27 (90 aa).

A disordered region spans residues Met-1–Arg-20.

Belongs to the bacterial ribosomal protein bL27 family.

The chain is Large ribosomal subunit protein bL27 from Nitrobacter hamburgensis (strain DSM 10229 / NCIMB 13809 / X14).